Here is a 396-residue protein sequence, read N- to C-terminus: Pre-mRNA-splicing regulator WTAP (396 aa).

The residue at position 1 (Met-1) is an N-acetylmethionine. Residue Ser-14 is modified to Phosphoserine. Low complexity-rich tracts occupy residues 240–257, 278–291, and 304–316; these read QQQQ…TTAS, SNGS…SGSG, and PSSP…SSNS. The disordered stretch occupies residues 240-396; the sequence is QQQQSQASAP…SSVNVQGSVL (157 aa). A phosphoserine mark is found at Ser-305, Ser-306, and Ser-341. Polar residues predominate over residues 340 to 356; the sequence is DSPTGSENSLTHQSNDT. Thr-350 carries the post-translational modification Phosphothreonine. The span at 357–368 shows a compositional bias: basic and acidic residues; it reads DSSHDPQEEKAV. A compositionally biased stretch (polar residues) spans 380–396; that stretch reads HVQNGLDSSVNVQGSVL. Position 388 is a phosphoserine (Ser-388).

Belongs to the fl(2)d family. As to quaternary structure, component of the WMM complex, a N6-methyltransferase complex composed of a catalytic subcomplex, named MAC, and of an associated subcomplex, named MACOM. The MAC subcomplex is composed of METTL3 and METTL14. The MACOM subcomplex is composed of WTAP, ZC3H13, CBLL1/HAKAI, VIRMA, and, in some cases of RBM15 (RBM15 or RBM15B). Interacts with WT1. Also a component of a MACOM-like complex, named WTAP complex, composed of WTAP, ZC3H13, CBLL1, VIRMA, RBM15, BCLAF1 and THRAP3. In terms of tissue distribution, ubiquitously expressed.

The protein localises to the nucleus speckle. Its subcellular location is the nucleus. It localises to the nucleoplasm. It is found in the cytoplasm. Associated component of the WMM complex, a complex that mediates N6-methyladenosine (m6A) methylation of RNAs, a modification that plays a role in the efficiency of mRNA splicing and RNA processing. Required for accumulation of METTL3 and METTL14 to nuclear speckle. Acts as a mRNA splicing regulator. Regulates G2/M cell-cycle transition by binding to the 3' UTR of CCNA2, which enhances its stability. Impairs WT1 DNA-binding ability and inhibits expression of WT1 target genes. The sequence is that of Pre-mRNA-splicing regulator WTAP from Homo sapiens (Human).